Reading from the N-terminus, the 138-residue chain is Large ribosomal subunit protein bL19 (138 aa).

The protein belongs to the bacterial ribosomal protein bL19 family.

Its function is as follows. This protein is located at the 30S-50S ribosomal subunit interface and may play a role in the structure and function of the aminoacyl-tRNA binding site. In Rickettsia conorii (strain ATCC VR-613 / Malish 7), this protein is Large ribosomal subunit protein bL19.